Here is a 483-residue protein sequence, read N- to C-terminus: Dihydrolipoyllysine-residue acetyltransferase component of pyruvate dehydrogenase complex, mitochondrial (483 aa).

The transit peptide at Met-1 to Gln-28 directs the protein to the mitochondrion. A Lipoyl-binding domain is found at His-53–Val-129. Position 94 is an N6-lipoyllysine (Lys-94). Disordered regions lie at residues Ile-143–Phe-187 and Glu-234–Asp-254. Residues Ser-146–Ser-160 are compositionally biased toward basic and acidic residues. Over residues Ala-161 to Ser-178 the composition is skewed to polar residues. Residues Phe-187–Lys-224 form the Peripheral subunit-binding (PSBD) domain. Residues Ala-235 to Pro-252 are compositionally biased toward low complexity. Residues His-456 and Asp-460 contribute to the active site.

This sequence belongs to the 2-oxoacid dehydrogenase family. Requires (R)-lipoate as cofactor.

It localises to the mitochondrion matrix. It carries out the reaction N(6)-[(R)-dihydrolipoyl]-L-lysyl-[protein] + acetyl-CoA = N(6)-[(R)-S(8)-acetyldihydrolipoyl]-L-lysyl-[protein] + CoA. In terms of biological role, the pyruvate dehydrogenase complex catalyzes the overall conversion of pyruvate to acetyl-CoA and CO(2). It contains multiple copies of three enzymatic components: pyruvate dehydrogenase (E1), dihydrolipoamide acetyltransferase (E2) and lipoamide dehydrogenase (E3). The chain is Dihydrolipoyllysine-residue acetyltransferase component of pyruvate dehydrogenase complex, mitochondrial from Schizosaccharomyces pombe (strain 972 / ATCC 24843) (Fission yeast).